A 777-amino-acid chain; its full sequence is Intraflagellar transport protein 80 homolog (777 aa).

WD repeat units lie at residues 12–50, 104–143, 145–185, 186–225, 227–265, 267–306, and 504–542; these read KHQE…TSLI, AHCG…RSTL, QQGT…LQWK, AHDG…LYGS, PHEH…YALE, PNTG…WEWK, and KLGT…YVDR.

Component of the IFT complex B, at least composed of IFT20, IFT22, IFT25, IFT27, IFT46, IFT52, TRAF3IP1/IFT54, IFT57, IFT74, IFT80, IFT81, and IFT88. Interacts with IFT88. Interacts with IFT57 and IFT70B.

It is found in the cytoplasm. It localises to the cytoskeleton. The protein resides in the cilium basal body. Its subcellular location is the cilium axoneme. Functionally, component of the intraflagellar transport (IFT) complex B, which is essential for the development and maintenance of motile and sensory cilia. In Mus musculus (Mouse), this protein is Intraflagellar transport protein 80 homolog (Ift80).